The primary structure comprises 415 residues: MQVYAVGGAIRDELLGKPSQDRDYVVVGATPADMEAAGYKPVGKDFPVFLHPRTKEEYALARTERKTAMGYKGFAFYCEPDVTLDDDLVRRDLTINAMARAVDDDGKLVGPVIDPHGGQRDLAARQFRHVSEAFAEDPVRILRVARFAARFHDFTVAPETVALMRRMVDAGEVDALVPERVWQELARGLMEARPARMFEVLRQCGALARLLPELDRLWGVPQRADYHPEVDTGVHVMMVIDCAAAMGTTLAVRFAALVHDLGKGTTPEHVLPRHLGHETRSVELLEDVCKRLRVPNDCRDLAVVVAREHGNIHRSMEFGAAAITRLLERCDALRKPGRFADALLACEADKRGRKGFESDTYPQKARLLAALDAAASVDAGAIAKALADDVSKIRERVHEARVAAVDARLKQLADH.

Residues Gly8 and Arg11 each contribute to the ATP site. The CTP site is built by Gly8 and Arg11. Asp21 and Asp23 together coordinate Mg(2+). ATP is bound by residues Arg91, Arg143, and Arg146. Arg91, Arg143, and Arg146 together coordinate CTP. Residues 232 to 333 (TGVHVMMVID…TRLLERCDAL (102 aa)) enclose the HD domain.

This sequence belongs to the tRNA nucleotidyltransferase/poly(A) polymerase family. Bacterial CCA-adding enzyme type 1 subfamily. As to quaternary structure, monomer. Can also form homodimers and oligomers. Requires Mg(2+) as cofactor. Ni(2+) serves as cofactor.

The enzyme catalyses a tRNA precursor + 2 CTP + ATP = a tRNA with a 3' CCA end + 3 diphosphate. It carries out the reaction a tRNA with a 3' CCA end + 2 CTP + ATP = a tRNA with a 3' CCACCA end + 3 diphosphate. Its function is as follows. Catalyzes the addition and repair of the essential 3'-terminal CCA sequence in tRNAs without using a nucleic acid template. Adds these three nucleotides in the order of C, C, and A to the tRNA nucleotide-73, using CTP and ATP as substrates and producing inorganic pyrophosphate. tRNA 3'-terminal CCA addition is required both for tRNA processing and repair. Also involved in tRNA surveillance by mediating tandem CCA addition to generate a CCACCA at the 3' terminus of unstable tRNAs. While stable tRNAs receive only 3'-terminal CCA, unstable tRNAs are marked with CCACCA and rapidly degraded. This Cupriavidus pinatubonensis (strain JMP 134 / LMG 1197) (Cupriavidus necator (strain JMP 134)) protein is Multifunctional CCA protein.